Here is a 652-residue protein sequence, read N- to C-terminus: Phosphomethylpyrimidine synthase (652 aa).

Residues N235, M264, Y293, H329, 349–351 (SRG), 390–393 (DGMR), and E429 contribute to the substrate site. Zn(2+) is bound at residue H433. Residue Y456 coordinates substrate. H497 is a binding site for Zn(2+). Residues C577, C580, and C585 each coordinate [4Fe-4S] cluster.

The protein belongs to the ThiC family. In terms of assembly, homodimer. [4Fe-4S] cluster is required as a cofactor.

It carries out the reaction 5-amino-1-(5-phospho-beta-D-ribosyl)imidazole + S-adenosyl-L-methionine = 4-amino-2-methyl-5-(phosphooxymethyl)pyrimidine + CO + 5'-deoxyadenosine + formate + L-methionine + 3 H(+). It participates in cofactor biosynthesis; thiamine diphosphate biosynthesis. Functionally, catalyzes the synthesis of the hydroxymethylpyrimidine phosphate (HMP-P) moiety of thiamine from aminoimidazole ribotide (AIR) in a radical S-adenosyl-L-methionine (SAM)-dependent reaction. In Shewanella sediminis (strain HAW-EB3), this protein is Phosphomethylpyrimidine synthase.